We begin with the raw amino-acid sequence, 170 residues long: MKTIEVDDQIYRYIASRTLHIGESASDILRRLLALPLDTEPTVALGHEANAEQTDEVSTDVLTMLLDNAQLAKEESAIARFMLILSALYRSQPDAFRHAADIKGRKRIYFAEDPQALLDNGKTTKPKPVPETPYWVITNTNTGRKRLIIEQLMQAMGYSADLIAEVCNKV.

An interaction with DNA region spans residues 139-145 (NTNTGRK).

It belongs to the SeqA family. Homodimer. Polymerizes to form helical filaments.

Its subcellular location is the cytoplasm. Negative regulator of replication initiation, which contributes to regulation of DNA replication and ensures that replication initiation occurs exactly once per chromosome per cell cycle. Binds to pairs of hemimethylated GATC sequences in the oriC region, thus preventing assembly of replication proteins and re-initiation at newly replicated origins. Repression is relieved when the region becomes fully methylated. This is Negative modulator of initiation of replication from Tolumonas auensis (strain DSM 9187 / NBRC 110442 / TA 4).